The sequence spans 373 residues: P2Y purinoceptor 1 (373 aa).

Topologically, residues 1 to 51 are extracellular; that stretch reads MTEVLWPAVPNGTDAAFLAGPGSSWGNSTVASTAAVSSSFKCALTKTGFQF. N-linked (GlcNAc...) asparagine glycosylation is found at Asn-11 and Asn-27. Intrachain disulfides connect Cys-42–Cys-296 and Cys-124–Cys-202. Residue Lys-46 coordinates ADP. The helical transmembrane segment at 52 to 74 threads the bilayer; that stretch reads YYLPAVYILVFIIGFLGNSVAIW. The Cytoplasmic segment spans residues 75 to 87; sequence MFVFHMKPWSGIS. The helical transmembrane segment at 88–109 threads the bilayer; that stretch reads VYMFNLALADFLYVLTLPALIF. At 110–125 the chain is on the extracellular side; the sequence is YYFNKTDWIFGDAMCK. Residue Asn-113 is glycosylated (N-linked (GlcNAc...) asparagine). A helical membrane pass occupies residues 126 to 147; that stretch reads LQRFIFHVNLYGSILFLTCISA. Residues 148 to 166 are Cytoplasmic-facing; that stretch reads HRYSGVVYPLKSLGRLKKK. A helical transmembrane segment spans residues 167–188; the sequence is NAICISVLVWLIVVVAISPILF. Over 189–214 the chain is Extracellular; sequence YSGTGVRKNKTITCYDTTSDEYLRSY. N-linked (GlcNAc...) asparagine glycosylation occurs at Asn-197. 203–205 lines the ADP pocket; that stretch reads YDT. A helical transmembrane segment spans residues 215–237; sequence FIYSMCTTVAMFCVPLVLILGCY. Residues 238–260 are Cytoplasmic-facing; it reads GLIVRALIYKDLDNSPLRRKSIY. The chain crosses the membrane as a helical span at residues 261–284; that stretch reads LVIIVLTVFAVSYIPFHVMKTMNL. Residues 283–287, 303–306, and Arg-310 contribute to the ADP site; these read NLRAR and YATY. The Extracellular portion of the chain corresponds to 285–303; it reads RARLDFQTPAMCAFNDRVY. Residues 304 to 325 form a helical membrane-spanning segment; the sequence is ATYQVTRGLASLNSCVDPILYF. Topologically, residues 326–373 are cytoplasmic; sequence LAGDTFRRRLSRATRKASRRSEANLQSKSEDMTLNILPEFKQNGDTSL.

It belongs to the G-protein coupled receptor 1 family.

It localises to the cell membrane. Its activity is regulated as follows. ATP functions as antagonist and inhibits ADP-induced mobilization of Ca(2+). The P2Y1 receptor-specific antagonists A3P5PS, A3P5P and A2P5P inhibit downstream signaling mediated by mobilization of Ca(2+) from intracellular stores, and platelet shape changes in response to extracellular ADP. Functionally, receptor for extracellular adenine nucleotides such as ADP. In platelets, binding to ADP leads to mobilization of intracellular calcium ions via activation of phospholipase C, a change in platelet shape, and ultimately platelet aggregation. The chain is P2Y purinoceptor 1 (P2RY1) from Homo sapiens (Human).